A 554-amino-acid chain; its full sequence is 3-(3-hydroxy-phenyl)propionate/3-hydroxycinnamic acid hydroxylase (554 aa).

Residues 17–46 (QVAI…VVEK) and 285–295 (FRIDRVLLAGD) each bind FAD.

This sequence belongs to the PheA/TfdB FAD monooxygenase family. Requires FAD as cofactor.

It catalyses the reaction 3-(3-hydroxyphenyl)propanoate + NADH + O2 + H(+) = 3-(2,3-dihydroxyphenyl)propanoate + NAD(+) + H2O. The catalysed reaction is (2E)-3-(3-hydroxyphenyl)prop-2-enoate + NADH + O2 + H(+) = (2E)-3-(2,3-dihydroxyphenyl)prop-2-enoate + NAD(+) + H2O. It functions in the pathway aromatic compound metabolism; 3-phenylpropanoate degradation. Catalyzes the insertion of one atom of molecular oxygen into position 2 of the phenyl ring of 3-(3-hydroxyphenyl)propionate (3-HPP) and hydroxycinnamic acid (3HCI). This is 3-(3-hydroxy-phenyl)propionate/3-hydroxycinnamic acid hydroxylase from Shigella sonnei (strain Ss046).